Reading from the N-terminus, the 747-residue chain is MLKLFSAFKKDRIWDFDGGIHPPEMKTQSSRTPLRQIPLPEQFIIPLKQHLGPEGEICVSVGDKVLRGQPLTRGRGRTLPVHAPTSGTVNAIRQHTTAHPSGLSELSIIIVPDGEDRWSDRQTLADYQTQSTDTLLAHLHQAGIAGLGGAGFPTAAKLQGGMRGIETLIINGAECEPYITADDRLMQECADEIIQGVEILSFLLQPKRILIGIEDNKPEAISALRLALGKRSDMQLRVIPTKYPSGGAKQLTKILTGKEVPFGKHSAAIGVLMQNVGTAFAIKRAVIDGEPLTERVVTLTGEALRQPGNVWARLGTPVRHLLKQGGFHVNKQPMVVMGGPLMGFTLPSLDVPIVKISNCLLAPSHTEMEPVAEEQSCIRCSQCADACPAGLLPQQLYWFSRGQEHEKARNHHLFDCIECGACAYVCPSNIPLVQYYRQEKAEIRAIDEDAQRAAQAKVRFDAKQARLEREKAARELRHKQAATGVSTSDKDAVQAALERVRRKQSTTTEIGAPIAVMPDAQPDNSAAIAARAARKALVREERARENQTQQETPTVDVPSTELDDPRKAAVAAALARVKARKAAQQTATNAEAPVSSVTSDVVAEPVAVVETQEPDDPRKAAVAAAIARVKARKAAQQTATNAEAPVSSVTSDVVAEPVAVVETQEPDDPRKAAVAAAIARVKARKAAQQTATNAEAPVSSVASDIVAEPVAVVETQEPEDPRKAAVAAAIARVKARKAAQASSHQEE.

4Fe-4S ferredoxin-type domains follow at residues 368-397 and 407-436; these read MEPVAEEQSCIRCSQCADACPAGLLPQQLY and KARNHHLFDCIECGACAYVCPSNIPLVQYY. [4Fe-4S] cluster is bound by residues Cys-377, Cys-380, Cys-383, Cys-387, Cys-416, Cys-419, Cys-422, and Cys-426. The disordered stretch occupies residues 538–564; sequence VREERARENQTQQETPTVDVPSTELDD.

The protein belongs to the 4Fe4S bacterial-type ferredoxin family. RnfC subfamily. As to quaternary structure, the complex is composed of six subunits: RnfA, RnfB, RnfC, RnfD, RnfE and RnfG. It depends on [4Fe-4S] cluster as a cofactor.

The protein localises to the cell inner membrane. Its function is as follows. Part of a membrane-bound complex that couples electron transfer with translocation of ions across the membrane. The polypeptide is Ion-translocating oxidoreductase complex subunit C (Pectobacterium carotovorum subsp. carotovorum (strain PC1)).